The following is a 124-amino-acid chain: Small polypeptide ROTUNDIFOLIA LIKE 3 (124 aa).

The segment at Met-1–Ser-23 is disordered. N-linked (GlcNAc...) asparagine glycans are attached at residues Asn-35 and Asn-38. Residues Ala-59–Ser-75 form a helical membrane-spanning segment. Positions Trp-60–Lys-95 are disordered. Low complexity predominate over residues Ser-71 to Gln-91. A glycan (N-linked (GlcNAc...) asparagine) is linked at Asn-88. The tract at residues Arg-92–Tyr-124 is required for DVL/RTFL small polypeptide activity.

Belongs to the DVL/RTFL small polypeptides family.

It localises to the cell membrane. Small polypeptide acting as a regulatory molecule which coordinates cellular responses required for differentiation, growth and development, probably by restricting polar cell proliferation in lateral organs (e.g. leaves and petioles). The protein is Small polypeptide ROTUNDIFOLIA LIKE 3 of Oryza sativa subsp. japonica (Rice).